Consider the following 279-residue polypeptide: NADPH-dependent 7-cyano-7-deazaguanine reductase (279 aa).

86-88 provides a ligand contact to substrate; it reads VES. 88–89 lines the NADPH pocket; the sequence is SK. The active-site Thioimide intermediate is the Cys-187. The active-site Proton donor is the Asp-194. Residue 226-227 participates in substrate binding; sequence HE. An NADPH-binding site is contributed by 255–256; it reads RG.

Belongs to the GTP cyclohydrolase I family. QueF type 2 subfamily. Homodimer.

It is found in the cytoplasm. The enzyme catalyses 7-aminomethyl-7-carbaguanine + 2 NADP(+) = 7-cyano-7-deazaguanine + 2 NADPH + 3 H(+). It functions in the pathway tRNA modification; tRNA-queuosine biosynthesis. Its function is as follows. Catalyzes the NADPH-dependent reduction of 7-cyano-7-deazaguanine (preQ0) to 7-aminomethyl-7-deazaguanine (preQ1). This chain is NADPH-dependent 7-cyano-7-deazaguanine reductase, found in Actinobacillus succinogenes (strain ATCC 55618 / DSM 22257 / CCUG 43843 / 130Z).